Reading from the N-terminus, the 404-residue chain is CD209 antigen (404 aa).

Topologically, residues 1 to 37 (MSDSKEPRLQQLDLLEEEQLGGVGFRQTRGYKSLAGC) are cytoplasmic. 3 consecutive short sequence motifs (endocytosis signal) follow at residues 14–15 (LL), 16–18 (EEE), and 31–34 (YKSL). A helical; Signal-anchor for type II membrane protein transmembrane segment spans residues 38 to 58 (LGHGPLVLQLLSFTLLAGLLV). The Extracellular segment spans residues 59–404 (QVSKVPSSLS…APTTPNPPPA (346 aa)). An N-linked (GlcNAc...) asparagine glycan is attached at N80. A run of 7 repeats spans residues 96–118 (KQQEIYQELTRLKAAVGELPEKS), 119–141 (KQQEIYEELTRLKAAVGELPEKS), 142–164 (KLQEIYQELTRLKAAVGELPEKS), 165–187 (KMQEIYQELSRLKAAVGDLPEKS), 188–210 (KQQEIYQELSRLKAAVGDLPEKS), 211–233 (KQQEIYQKLTQLKAAVDGLPDRS), and 234–257 (KQQEIYQELIQLKAAVERLCHPCP). The segment at 96–257 (KQQEIYQELT…AVERLCHPCP (162 aa)) is 7 X approximate tandem repeats. Intrachain disulfides connect C256/C267, C284/C377, and C356/C369. Residues 263 to 378 (FQGNCYFMSN…CNLAKFWICK (116 aa)) enclose the C-type lectin domain. Positions 347, 349, 351, 354, 365, and 366 each coordinate Ca(2+). The segment at 382–404 (ASCSGDEERLLSPAPTTPNPPPA) is disordered.

As to quaternary structure, homotetramer. Interacts with C1QBP; the interaction is indicative for a C1q:C1QBP:CD209 signaling complex. Interacts with ICAM2 and ICAM3 by binding to mannose-like carbohydrates. Interacts (via C-type lectin domain) with CEACAM1 (via Lewis X moieties); this interaction is regulated by the glycosylation pattern of CEACAM1 on cell types and regulates contact between dendritic cells and neutrophils.

The protein resides in the membrane. Pathogen-recognition receptor expressed on the surface of immature dendritic cells (DCs) and involved in initiation of primary immune response. Thought to mediate the endocytosis of pathogens which are subsequently degraded in lysosomal compartments. The receptor returns to the cell membrane surface and the pathogen-derived antigens are presented to resting T-cells via MHC class II proteins to initiate the adaptive immune response. Probably recognizes in a calcium-dependent manner high mannose N-linked oligosaccharides in a variety of pathogen antigens. Functionally, on DCs it is a high affinity receptor for ICAM2 and ICAM3 by binding to mannose-like carbohydrates. May act as a DC rolling receptor that mediates transendothelial migration of DC presursors from blood to tissues by binding endothelial ICAM2. Seems to regulate DC-induced T-cell proliferation by binding to ICAM3 on T-cells in the immunological synapse formed between DC and T-cells. In Macaca mulatta (Rhesus macaque), this protein is CD209 antigen (CD209).